A 295-amino-acid chain; its full sequence is Elongation factor Ts (295 aa).

Residues 79–82 (TDFV) form an involved in Mg(2+) ion dislocation from EF-Tu region.

It belongs to the EF-Ts family.

It is found in the cytoplasm. In terms of biological role, associates with the EF-Tu.GDP complex and induces the exchange of GDP to GTP. It remains bound to the aminoacyl-tRNA.EF-Tu.GTP complex up to the GTP hydrolysis stage on the ribosome. The polypeptide is Elongation factor Ts (Bacillus anthracis (strain A0248)).